Consider the following 544-residue polypeptide: MPGKPKHLGVPNGRMVLAVSDGELTSTSGSQAQGEGRGSSLSIHSLPSGPSSPFSTDEQPVASWAQSFERLLQDPRGLAYFTEFLKKEFSAENVTFWQACERFQQIPASDTKQLAQEAHNIYHEFLSSQALSPVNIDRQAWLSEEVLAQPRPDMFRAQQLQIFNLMKFDSYARFVKSPLYQECLLAEAEGRPLREPGSSHLGSPDTARKKPKLKPGKSLPLGVEELGQLPLAEGRPLRKSFRREMPGGAVNSALRRESQGSLNSSASLDLGFLAFVSSKSESHRKSLGSGEGESESRPGKYCCVYLPDGTASLALARPGLTIRDMLAGICEKRGLSLPDIKVYLVGKEQKALVLDQDCTVLADQEVRLENRITFQLELVGLERVVRISAKPTKRLQEALQPILAKHGLSLDQVVLHRPGEKQLVDLENLVSSVASQTLVLDTLPDAKTREASSIPPCRSQGCLPRTQTKDSHLPPLSSSLSVEDASGSTGKRQTCDIEGLVELLNRVQSSGAHDQRGLLRKEDLVLPEFLQLPSQRPGSQEAPP.

The tract at residues 19–59 is disordered; it reads VSDGELTSTSGSQAQGEGRGSSLSIHSLPSGPSSPFSTDEQ. 8 positions are modified to phosphoserine: serine 20, serine 42, serine 45, serine 143, serine 199, serine 203, serine 218, and serine 286. Residues 23–58 show a composition bias toward polar residues; the sequence is ELTSTSGSQAQGEGRGSSLSIHSLPSGPSSPFSTDE. The 118-residue stretch at 67-184 folds into the RGS domain; it reads SFERLLQDPR…VKSPLYQECL (118 aa). A disordered region spans residues 191–220; that stretch reads RPLREPGSSHLGSPDTARKKPKLKPGKSLP. Residues 297 to 424 are necessary for interaction with RABGEF1; it reads RPGKYCCVYL…LHRPGEKQLV (128 aa). 2 RBD domains span residues 300–371 and 373–443; these read KYCC…LENR and TFQL…LDTL. The segment at 449–493 is disordered; that stretch reads REASSIPPCRSQGCLPRTQTKDSHLPPLSSSLSVEDASGSTGKRQ. The residue at position 481 (serine 481) is a Phosphoserine. A GoLoco domain is found at 497 to 519; the sequence is IEGLVELLNRVQSSGAHDQRGLL.

As to quaternary structure, interacts with GNAI1, GNAI2 and GNAI3. Interacts with GNAO1. Interacts (via RGS and GoLoco domains) with GNAI1; the interaction occurs in the centrosomes. Interaction with GNAI1 or GNAI3 (via active GTP- or inactive GDP-bound forms) prevents association of RGS14 with centrosomes or nuclear localization. Interacts with RABGEF1; the interactions is GTP-dependent. Interacts with RAP2A; the interactions is GTP-dependent and does not alter its function on G(i) alpha subunits either as GAP or as GDI. Associates with microtubules. Found in a complex with at least BRAF, HRAS, MAP2K1, MAPK3 and RGS14. Interacts with RIC8A (via C-terminus). Interacts (via RBD 1 domain) with HRAS (active GTP-bound form preferentially). Interacts (via RBD domains) with BRAF (via N-terminus); the interaction mediates the formation of a ternary complex with RAF1. Interacts (via RBD domains) with RAF1 (via N-terminus); the interaction mediates the formation of a ternary complex with BRAF. Interacts with KRAS (active GTP-bound form preferentially), MRAS (active GTP-bound form preferentially), NRAS (active GTP-bound form preferentially) and RRAS (active GTP-bound form preferentially). Phosphorylated by PKC. Phosphorylation is increased in presence of forskolin and may enhance the GDI activity on G(i) alpha subunit GNAI1. Expressed in neurons of the V2 secondary visual cortex area (at protein level). Expressed at high levels in the brain cortex, hippocampus, striatum, thalamus and substantia nigra, in the lung, and spleen. Low expression has been found in heart, liver, skeletal muscle and testis.

The protein resides in the nucleus. The protein localises to the PML body. It localises to the cytoplasm. It is found in the membrane. Its subcellular location is the cell membrane. The protein resides in the cytoskeleton. The protein localises to the microtubule organizing center. It localises to the centrosome. It is found in the spindle. Its subcellular location is the spindle pole. The protein resides in the cell projection. The protein localises to the dendrite. It localises to the dendritic spine. It is found in the postsynaptic density. In terms of biological role, regulates G protein-coupled receptor signaling cascades. Inhibits signal transduction by increasing the GTPase activity of G protein alpha subunits, thereby driving them into their inactive GDP-bound form. Besides, modulates signal transduction via G protein alpha subunits by functioning as a GDP-dissociation inhibitor (GDI). Has GDI activity on G(i) alpha subunits GNAI1 and GNAI3, but not on GNAI2 and G(o)-alpha subunit GNAO1. Has GAP activity on GNAI0, GNAI2 and GNAI3. May act as a scaffold integrating G protein and Ras/Raf MAPkinase signaling pathways. Inhibits platelet-derived growth factor (PDGF)-stimulated ERK1/ERK2 phosphorylation; a process depending on its interaction with HRAS and that is reversed by G(i) alpha subunit GNAI1. Acts as a positive modulator of microtubule polymerisation and spindle organization through a G(i)-alpha-dependent mechanism. Plays a role in cell division; required for completion of the first mitotic division of the embryo. Involved in visual memory processing capacity; when overexpressed in the V2 secondary visual cortex area. Involved in hippocampal-based learning and memory; acts as a suppressor of synaptic plasticity in CA2 neurons. Required for the nerve growth factor (NGF)-mediated neurite outgrowth. Involved in stress resistance. The protein is Regulator of G-protein signaling 14 (Rgs14) of Rattus norvegicus (Rat).